Here is a 125-residue protein sequence, read N- to C-terminus: Fluoride-specific ion channel FluC (125 aa).

4 helical membrane-spanning segments follow: residues 1-21 (MIQALLVAVGGAIGSLLRYYV), 32-52 (AFPWGTLAVNVVGCFVIGVFA), 68-88 (LLITGFLGGFTTFSAFSLDAI), and 101-121 (IYTVASVGLSMAAVMAGLAVM). Na(+)-binding residues include glycine 75 and threonine 78.

This sequence belongs to the fluoride channel Fluc/FEX (TC 1.A.43) family.

It localises to the cell inner membrane. The catalysed reaction is fluoride(in) = fluoride(out). With respect to regulation, na(+) is not transported, but it plays an essential structural role and its presence is essential for fluoride channel function. Fluoride-specific ion channel. Important for reducing fluoride concentration in the cell, thus reducing its toxicity. The polypeptide is Fluoride-specific ion channel FluC (Rhizobium leguminosarum bv. trifolii (strain WSM2304)).